A 187-amino-acid chain; its full sequence is Ribosome maturation factor RimM (187 aa).

The PRC barrel domain occupies 96 to 169; the sequence is EDEFFYADLE…KLVIDPTAAG (74 aa).

The protein belongs to the RimM family. In terms of assembly, binds ribosomal protein uS19.

The protein localises to the cytoplasm. An accessory protein needed during the final step in the assembly of 30S ribosomal subunit, possibly for assembly of the head region. Essential for efficient processing of 16S rRNA. May be needed both before and after RbfA during the maturation of 16S rRNA. It has affinity for free ribosomal 30S subunits but not for 70S ribosomes. In Sinorhizobium medicae (strain WSM419) (Ensifer medicae), this protein is Ribosome maturation factor RimM.